The chain runs to 113 residues: U11-theraphotoxin-Hhn1a (113 aa).

The signal sequence occupies residues 1–21 (MNTVRVTFLLVFVLAVSLGRA). A propeptide spanning residues 22 to 74 (DKEENRMEMQEKTEQGKSYLDFAENLLLQKLEELEAKLLEEDSEESRNSRQKR) is cleaved from the precursor. A disordered region spans residues 61–83 (EEDSEESRNSRQKRCIGEGVPCD). 3 disulfides stabilise this stretch: Cys-75–Cys-90, Cys-82–Cys-95, and Cys-89–Cys-110.

The protein belongs to the neurotoxin 14 (magi-1) family. 01 (HNTX-16) subfamily. In terms of tissue distribution, expressed by the venom gland.

The protein resides in the secreted. Probable ion channel inhibitor. This Cyriopagopus hainanus (Chinese bird spider) protein is U11-theraphotoxin-Hhn1a.